The primary structure comprises 297 residues: Acetyl-coenzyme A carboxylase carboxyl transferase subunit beta (297 aa).

The region spanning 25-294 (LWVKCPETGQ…LPPKGRLPRP (270 aa)) is the CoA carboxyltransferase N-terminal domain.

This sequence belongs to the AccD/PCCB family. As to quaternary structure, acetyl-CoA carboxylase is a heterohexamer composed of biotin carboxyl carrier protein (AccB), biotin carboxylase (AccC) and two subunits each of ACCase subunit alpha (AccA) and ACCase subunit beta (AccD).

The protein resides in the cytoplasm. The catalysed reaction is N(6)-carboxybiotinyl-L-lysyl-[protein] + acetyl-CoA = N(6)-biotinyl-L-lysyl-[protein] + malonyl-CoA. It participates in lipid metabolism; malonyl-CoA biosynthesis; malonyl-CoA from acetyl-CoA: step 1/1. Component of the acetyl coenzyme A carboxylase (ACC) complex. Biotin carboxylase (BC) catalyzes the carboxylation of biotin on its carrier protein (BCCP) and then the CO(2) group is transferred by the transcarboxylase to acetyl-CoA to form malonyl-CoA. The sequence is that of Acetyl-coenzyme A carboxylase carboxyl transferase subunit beta from Xanthobacter autotrophicus (strain ATCC BAA-1158 / Py2).